The following is a 104-amino-acid chain: Large ribosomal subunit protein bL21 (104 aa).

Belongs to the bacterial ribosomal protein bL21 family. As to quaternary structure, part of the 50S ribosomal subunit. Contacts protein L20.

In terms of biological role, this protein binds to 23S rRNA in the presence of protein L20. The polypeptide is Large ribosomal subunit protein bL21 (Leptospira interrogans serogroup Icterohaemorrhagiae serovar copenhageni (strain Fiocruz L1-130)).